A 171-amino-acid chain; its full sequence is ATP synthase subunit b (171 aa).

A helical transmembrane segment spans residues 19–39; it reads VGVGLILFIAIVIWAKAPAMI.

This sequence belongs to the ATPase B chain family. As to quaternary structure, F-type ATPases have 2 components, F(1) - the catalytic core - and F(0) - the membrane proton channel. F(1) has five subunits: alpha(3), beta(3), gamma(1), delta(1), epsilon(1). F(0) has three main subunits: a(1), b(2) and c(10-14). The alpha and beta chains form an alternating ring which encloses part of the gamma chain. F(1) is attached to F(0) by a central stalk formed by the gamma and epsilon chains, while a peripheral stalk is formed by the delta and b chains.

The protein localises to the cell inner membrane. F(1)F(0) ATP synthase produces ATP from ADP in the presence of a proton or sodium gradient. F-type ATPases consist of two structural domains, F(1) containing the extramembraneous catalytic core and F(0) containing the membrane proton channel, linked together by a central stalk and a peripheral stalk. During catalysis, ATP synthesis in the catalytic domain of F(1) is coupled via a rotary mechanism of the central stalk subunits to proton translocation. In terms of biological role, component of the F(0) channel, it forms part of the peripheral stalk, linking F(1) to F(0). The chain is ATP synthase subunit b from Caulobacter sp. (strain K31).